We begin with the raw amino-acid sequence, 86 residues long: Acyl carrier protein (86 aa).

One can recognise a Carrier domain in the interval 2-82 (ATVFERVKKV…AVVDYLKSKG (81 aa)). Ser37 carries the post-translational modification O-(pantetheine 4'-phosphoryl)serine.

The protein belongs to the acyl carrier protein (ACP) family. In terms of processing, 4'-phosphopantetheine is transferred from CoA to a specific serine of apo-ACP by AcpS. This modification is essential for activity because fatty acids are bound in thioester linkage to the sulfhydryl of the prosthetic group.

Its subcellular location is the cytoplasm. It functions in the pathway lipid metabolism; fatty acid biosynthesis. Carrier of the growing fatty acid chain in fatty acid biosynthesis. The protein is Acyl carrier protein of Dehalococcoides mccartyi (strain ATCC BAA-2100 / JCM 16839 / KCTC 5957 / BAV1).